We begin with the raw amino-acid sequence, 1002 residues long: Isoleucine--tRNA ligase, mitochondrial (1002 aa).

Positions P94 to H104 match the 'HIGH' region motif. Residues K668–S672 carry the 'KMSKS' region motif. K671 provides a ligand contact to ATP.

This sequence belongs to the class-I aminoacyl-tRNA synthetase family.

It localises to the mitochondrion matrix. It catalyses the reaction tRNA(Ile) + L-isoleucine + ATP = L-isoleucyl-tRNA(Ile) + AMP + diphosphate. The chain is Isoleucine--tRNA ligase, mitochondrial (ISM1) from Saccharomyces cerevisiae (strain ATCC 204508 / S288c) (Baker's yeast).